Reading from the N-terminus, the 544-residue chain is Cytochrome P450 monooxygenase cle2 (544 aa).

A helical membrane pass occupies residues 19–39 (LGLLIGLSLILSITWTAYTIL). Positions 273 to 305 (RTQQVEQSIEKNTKNEKKEDEDEDQNEDEETPG) are disordered. Residues 280-290 (SIEKNTKNEKK) show a composition bias toward basic and acidic residues. Over residues 291 to 304 (EDEDEDQNEDEETP) the composition is skewed to acidic residues. Position 478 (Cys-478) interacts with heme.

The protein belongs to the cytochrome P450 family. It depends on heme as a cofactor.

The protein resides in the membrane. It participates in secondary metabolite biosynthesis; terpenoid biosynthesis. Its function is as follows. Cytochrome P450 monooxygenase; part of the cluster A that mediates the biosynthesis of chevalone E and its oxidized derivatives that possess a unique five-membered lactone ring and can synergistically enhance the cytotoxicity of doxorubicin (DOX) in breast cancer cells. Within the pathway, cle2 is involved in hydroxylation of the chavalone E scaffold at position C-20 and contributes with cle4 to the production of seven oxidation derivatives. The molecular scaffold is commonly biosynthesized by a series of enzymes including the non-reducing polyketide synthase (NR-PKS) cle1 that produces the alpha-pyrone triacetic acid lactone (TAL); The membrane-bound prenyltransferase cle5 that accepts TAL as its substrate to perform a C-3 geranylgeranylation reaction, in which the pathway-dedicated GGPS cle6 is required to provide GGPP, the other substrate of cle5; the FAD-dependent monooxygenase Cle3 that forms an (S)-epoxide ring at the terminal olefin of the geranylgeranyl group; and the terpene cyclase Cle7 that catalyzes the cyclization of the prenyl group that yields the pentacyclic pathway intermediate chevalone E. Chevalone E can derivatize into seven new oxidized analogs by the cytochrome P450 monooxygenases cle2 (acting at C-20) and cle4 (acting at C-11 and C-12). This is Cytochrome P450 monooxygenase cle2 from Aspergillus versicolor.